We begin with the raw amino-acid sequence, 718 residues long: ADP-ribosylation factor-binding protein GGA3 (718 aa).

The region spanning 16 to 146 is the VHS domain; sequence ATNPSNRQED…MLKRQGIVQS (131 aa). Ser-159 and Ser-275 each carry phosphoserine. The GAT domain occupies 171 to 298; it reads DEEKSKLLAR…VINSYKTIIE (128 aa). Residues 299–588 form a unstructured hinge region; it reads GQIVNGEVTT…VHVPLESIKP (290 aa). Low complexity-rich tracts occupy residues 334–350 and 360–369; these read APSN…SGIP and GPPRSRSSSQ. The segment at 334-381 is disordered; it reads APSNSSPALAPPTSGIPILPPPPQTSGPPRSRSSSQAEAPPGSDSTNN. Residues 387-391 carry the Autoinhibitory motif; it reads DEELL. 2 disordered regions span residues 395–455 and 477–506; these read LTDP…MSQA and SFMF…STSH. In terms of domain architecture, GAE spans 589–710; sequence SSALPVTAYD…TELGEVDQFP (122 aa).

It belongs to the GGA protein family. Monomer. Interacts with GGA1 and GGA2. Binds to clathrin and activated ARFs, such as ARF1, ARF5 and ARF6. Binds RABEP1 and RABGEF1. Interacts with the membrane proteins M6PR/CD-MPR and IGF2R/CI-MPR and the accessory proteins SYNRG, EPN4, NECAP1, NECAP2 and AFTPH/aftiphilin. Interacts with TSG101 and UBC. Interacts with ADRA2B. Interacts with NTRK1; the interaction is independent of NTRK1 activation and ubiquitination. Interacts (via VHS domain) with BACE1 (via DXXLL motif). In terms of processing, phosphorylated by CK2 and dephosphorylated by PP2A. Phosphorylation of GGA3 allows the internal DXXLL motif to bind the VHS domain and to inhibit the recognition of cargo signals. Post-translationally, ubiquitinated. Proteolytically cleaved during apoptosis by CASP3.

The protein resides in the golgi apparatus. It is found in the trans-Golgi network membrane. It localises to the endosome membrane. Its subcellular location is the early endosome membrane. The protein localises to the recycling endosome membrane. In terms of biological role, plays a role in protein sorting and trafficking between the trans-Golgi network (TGN) and endosomes. Mediates the ARF-dependent recruitment of clathrin to the TGN and binds ubiquitinated proteins and membrane cargo molecules with a cytosolic acidic cluster-dileucine (DXXLL) motif. Plays a role in protein sorting and trafficking between the trans-Golgi network (TGN) and endosomes. Mediates the ARF-dependent recruitment of clathrin to the TGN and binds ubiquitinated proteins and membrane cargo molecules with a cytosolic acidic cluster-dileucine (DXXLL) motif. Mediates export of the GPCR receptor ADRA2B to the cell surface. Involved in BACE1 transport and sorting as well as regulation of BACE1 protein levels. Regulates retrograde transport of BACE1 from endosomes to the trans-Golgi network via interaction through the VHS motif and dependent of BACE1 phosphorylation. Modulates BACE1 protein levels independently of the interaction between VHS domain and DXXLL motif through recognition of ubiquitination. Key player in a novel DXXLL-mediated endosomal sorting machinery to the recycling pathway that targets NTRK1 to the plasma membrane. The chain is ADP-ribosylation factor-binding protein GGA3 (Gga3) from Mus musculus (Mouse).